The sequence spans 340 residues: Tetraacyldisaccharide 4'-kinase (340 aa).

ATP is bound at residue 50–57 (HGGGAGKT).

It belongs to the LpxK family.

The enzyme catalyses a lipid A disaccharide + ATP = a lipid IVA + ADP + H(+). It participates in glycolipid biosynthesis; lipid IV(A) biosynthesis; lipid IV(A) from (3R)-3-hydroxytetradecanoyl-[acyl-carrier-protein] and UDP-N-acetyl-alpha-D-glucosamine: step 6/6. Transfers the gamma-phosphate of ATP to the 4'-position of a tetraacyldisaccharide 1-phosphate intermediate (termed DS-1-P) to form tetraacyldisaccharide 1,4'-bis-phosphate (lipid IVA). This chain is Tetraacyldisaccharide 4'-kinase, found in Rhodopseudomonas palustris (strain BisA53).